A 135-amino-acid chain; its full sequence is Ribonuclease P protein component (135 aa).

The interval 115–135 is disordered; sequence TNETVSPVSDTPLPQHERGSQ.

The protein belongs to the RnpA family. In terms of assembly, consists of a catalytic RNA component (M1 or rnpB) and a protein subunit.

It catalyses the reaction Endonucleolytic cleavage of RNA, removing 5'-extranucleotides from tRNA precursor.. Functionally, RNaseP catalyzes the removal of the 5'-leader sequence from pre-tRNA to produce the mature 5'-terminus. It can also cleave other RNA substrates such as 4.5S RNA. The protein component plays an auxiliary but essential role in vivo by binding to the 5'-leader sequence and broadening the substrate specificity of the ribozyme. In Chloroflexus aurantiacus (strain ATCC 29366 / DSM 635 / J-10-fl), this protein is Ribonuclease P protein component.